The chain runs to 200 residues: NADH-quinone oxidoreductase subunit I (200 aa).

2 consecutive 4Fe-4S ferredoxin-type domains span residues 73-102 and 112-141; these read RLLE…METT and LNYS…HGGD. Residues Cys82, Cys85, Cys88, Cys92, Cys121, Cys124, Cys127, and Cys131 each coordinate [4Fe-4S] cluster.

It belongs to the complex I 23 kDa subunit family. NDH-1 is composed of 14 different subunits. Subunits NuoA, H, J, K, L, M, N constitute the membrane sector of the complex. [4Fe-4S] cluster is required as a cofactor.

It is found in the cell inner membrane. It catalyses the reaction a quinone + NADH + 5 H(+)(in) = a quinol + NAD(+) + 4 H(+)(out). Functionally, NDH-1 shuttles electrons from NADH, via FMN and iron-sulfur (Fe-S) centers, to quinones in the respiratory chain. The immediate electron acceptor for the enzyme in this species is believed to be ubiquinone. Couples the redox reaction to proton translocation (for every two electrons transferred, four hydrogen ions are translocated across the cytoplasmic membrane), and thus conserves the redox energy in a proton gradient. This Campylobacter hominis (strain ATCC BAA-381 / DSM 21671 / CCUG 45161 / LMG 19568 / NCTC 13146 / CH001A) protein is NADH-quinone oxidoreductase subunit I.